The primary structure comprises 292 residues: Protein/nucleic acid deglycase HchA (292 aa).

Residues 1-12 show a composition bias toward polar residues; that stretch reads MSQDVNELSKQP. The segment at 1–23 is disordered; sequence MSQDVNELSKQPTPDKAEDNAFF. The active-site Nucleophile is C190.

The protein belongs to the peptidase C56 family. HchA subfamily.

The protein resides in the cytoplasm. It carries out the reaction N(omega)-(1-hydroxy-2-oxopropyl)-L-arginyl-[protein] + H2O = lactate + L-arginyl-[protein] + H(+). The enzyme catalyses N(6)-(1-hydroxy-2-oxopropyl)-L-lysyl-[protein] + H2O = lactate + L-lysyl-[protein] + H(+). It catalyses the reaction S-(1-hydroxy-2-oxopropyl)-L-cysteinyl-[protein] + H2O = lactate + L-cysteinyl-[protein] + H(+). The catalysed reaction is N(omega)-(1-hydroxy-2-oxoethyl)-L-arginyl-[protein] + H2O = L-arginyl-[protein] + glycolate + H(+). It carries out the reaction N(6)-(1-hydroxy-2-oxoethyl)-L-lysyl-[protein] + H2O = glycolate + L-lysyl-[protein] + H(+). The enzyme catalyses S-(1-hydroxy-2-oxoethyl)-L-cysteinyl-[protein] + H2O = glycolate + L-cysteinyl-[protein] + H(+). It catalyses the reaction N(2)-(1-hydroxy-2-oxopropyl)-dGTP + H2O = lactate + dGTP + H(+). The catalysed reaction is N(2)-(1-hydroxy-2-oxopropyl)-GTP + H2O = lactate + GTP + H(+). It carries out the reaction N(2)-(1-hydroxy-2-oxopropyl)-GDP + H2O = lactate + GDP + H(+). The enzyme catalyses N(2)-(1-hydroxy-2-oxopropyl)-GMP + H2O = lactate + GMP + H(+). It catalyses the reaction N(2)-(1-hydroxy-2-oxoethyl)-dGTP + H2O = dGTP + glycolate + H(+). The catalysed reaction is N(2)-(1-hydroxy-2-oxoethyl)-GTP + H2O = glycolate + GTP + H(+). It carries out the reaction N(2)-(1-hydroxy-2-oxoethyl)-GDP + H2O = glycolate + GDP + H(+). The enzyme catalyses N(2)-(1-hydroxy-2-oxoethyl)-GMP + H2O = glycolate + GMP + H(+). It catalyses the reaction an N(2)-(1-hydroxy-2-oxopropyl)-guanosine in RNA + H2O = a guanosine in RNA + lactate + H(+). The catalysed reaction is an N(2)-(1-hydroxy-2-oxopropyl)-2'-deoxyguanosine in DNA + H2O = a 2'-deoxyguanosine in DNA + lactate + H(+). It carries out the reaction an N(2)-(1-hydroxy-2-oxoethyl)-guanosine in RNA + H2O = a guanosine in RNA + glycolate + H(+). The enzyme catalyses an N(2)-(1-hydroxy-2-oxoethyl)-2'-deoxyguanosine in DNA + H2O = a 2'-deoxyguanosine in DNA + glycolate + H(+). Functionally, protein and nucleotide deglycase that catalyzes the deglycation of the Maillard adducts formed between amino groups of proteins or nucleotides and reactive carbonyl groups of glyoxals. Thus, functions as a protein deglycase that repairs methylglyoxal- and glyoxal-glycated proteins, and releases repaired proteins and lactate or glycolate, respectively. Deglycates cysteine, arginine and lysine residues in proteins, and thus reactivates these proteins by reversing glycation by glyoxals. Acts on early glycation intermediates (hemithioacetals and aminocarbinols), preventing the formation of Schiff bases and advanced glycation endproducts (AGE). Also functions as a nucleotide deglycase able to repair glycated guanine in the free nucleotide pool (GTP, GDP, GMP, dGTP) and in DNA and RNA. Is thus involved in a major nucleotide repair system named guanine glycation repair (GG repair), dedicated to reversing methylglyoxal and glyoxal damage via nucleotide sanitization and direct nucleic acid repair. Plays an important role in protecting cells from carbonyl stress. The protein is Protein/nucleic acid deglycase HchA of Staphylococcus aureus (strain bovine RF122 / ET3-1).